The primary structure comprises 568 residues: CTP synthase (568 aa).

The amidoligase domain stretch occupies residues 1 to 276 (MPQARTIKHV…DAYLVRRLGL (276 aa)). S18 serves as a coordination point for CTP. Residue S18 participates in UTP binding. ATP-binding positions include 19 to 24 (SLGKGL) and D76. 2 residues coordinate Mg(2+): D76 and E150. Residues 157-159 (DIE), 197-202 (KTKPTQ), and K233 each bind CTP. UTP contacts are provided by residues 197–202 (KTKPTQ) and K233. The region spanning 301-550 (RIALVGKYVD…VNAALEYRAA (250 aa)) is the Glutamine amidotransferase type-1 domain. G364 provides a ligand contact to L-glutamine. C391 serves as the catalytic Nucleophile; for glutamine hydrolysis. L-glutamine is bound by residues 392–395 (LGLQ), E415, and R476. Catalysis depends on residues H523 and E525.

Belongs to the CTP synthase family. In terms of assembly, homotetramer.

It carries out the reaction UTP + L-glutamine + ATP + H2O = CTP + L-glutamate + ADP + phosphate + 2 H(+). It catalyses the reaction L-glutamine + H2O = L-glutamate + NH4(+). The catalysed reaction is UTP + NH4(+) + ATP = CTP + ADP + phosphate + 2 H(+). Its pathway is pyrimidine metabolism; CTP biosynthesis via de novo pathway; CTP from UDP: step 2/2. Its activity is regulated as follows. Allosterically activated by GTP, when glutamine is the substrate; GTP has no effect on the reaction when ammonia is the substrate. The allosteric effector GTP functions by stabilizing the protein conformation that binds the tetrahedral intermediate(s) formed during glutamine hydrolysis. Inhibited by the product CTP, via allosteric rather than competitive inhibition. Functionally, catalyzes the ATP-dependent amination of UTP to CTP with either L-glutamine or ammonia as the source of nitrogen. Regulates intracellular CTP levels through interactions with the four ribonucleotide triphosphates. In Saccharopolyspora erythraea (strain ATCC 11635 / DSM 40517 / JCM 4748 / NBRC 13426 / NCIMB 8594 / NRRL 2338), this protein is CTP synthase.